A 1118-amino-acid polypeptide reads, in one-letter code: Sodium-driven chloride bicarbonate exchanger (1118 aa).

2 disordered regions span residues 1–23 (MEIK…EEAV) and 58–97 (GRKS…TPSQ). The Cytoplasmic portion of the chain corresponds to 1 to 509 (MEIKDQGAQM…DFRDAFSLQC (509 aa)). Residues 59-76 (RKSHRRHRHRGHKHRKRD) show a composition bias toward basic residues. Residues 77 to 90 (RERDSGLEDGRESP) show a composition bias toward basic and acidic residues. At S89 the chain carries Phosphoserine. T94 is subject to Phosphothreonine. Zn(2+)-binding residues include H221 and H223. 2 disordered regions span residues 269 to 310 (AENK…KGPP) and 457 to 476 (NGTA…GPEL). Residue S276 is modified to Phosphoserine. The chain crosses the membrane as a helical span at residues 510–530 (LASFLFLYCACMSPVITFGGL). Topologically, residues 531–538 (LGEATEGR) are extracellular. The helical transmembrane segment at 539–559 (ISAIESLFGASMTGIAYSLFG) threads the bilayer. The Cytoplasmic portion of the chain corresponds to 560–562 (GQP). Residues 563–583 (LTILGSTGPVLVFEKILFKFC) traverse the membrane as a helical segment. Over 584–596 (KEYGLSYLSLRAS) the chain is Extracellular. The chain crosses the membrane as a helical span at residues 597-617 (IGLWTATLCIILVATDASSLV). The Cytoplasmic segment spans residues 618–626 (CYITRFTEE). The chain crosses the membrane as a helical span at residues 627–647 (AFASLICIIFIYEALEKLFEL). Residues 648–720 (SETYPINMHN…VGRACGHGHP (73 aa)) lie on the Extracellular side of the membrane. N-linked (GlcNAc...) asparagine glycans are attached at residues N677, N687, and N697. The helical transmembrane segment at 721 to 741 (YVPDVLFWSVILFFSTVTMSA) threads the bilayer. At 742-762 (TLKQFKTSRYFPTKVRSIVSD) the chain is on the cytoplasmic side. Residues 763-783 (FAVFLTILCMVLIDYAIGIPS) traverse the membrane as a helical segment. Over 784-809 (PKLQVPSVFKPTRDDRGWFVTPLGPN) the chain is Extracellular. The chain crosses the membrane as a helical span at residues 810–830 (PWWTIIAAIIPALLCTILIFM). At 831 to 855 (DQQITAVIINRKEHKLKKGCGYHLD) the chain is on the cytoplasmic side. Residues 856 to 876 (LLMVAVMLGVCSIMGLPWFVA) form a helical membrane-spanning segment. The Extracellular segment spans residues 877 to 912 (ATVLSITHVNSLKLESECSAPGEQPKFLGIREQRVT). Residues 913 to 933 (GLMIFILMGSSVFMTSILKFI) traverse the membrane as a helical segment. The Cytoplasmic segment spans residues 934–935 (PM). The chain crosses the membrane as a helical span at residues 936–956 (PVLYGVFLYMGASSLKGIQLF). The Extracellular portion of the chain corresponds to 957–998 (DRIKLFWMPAKHQPDFIYLRHVPLRKVHLFTVIQMSCLGLLW). The chain crosses the membrane as a helical span at residues 999–1019 (IIKVSRAAIVFPMMVLALVFV). The Cytoplasmic portion of the chain corresponds to 1020-1118 (RKLMDFLFTK…SRFPSKSSPS (99 aa)). Residues S1057 and S1085 each carry the phosphoserine modification.

This sequence belongs to the anion exchanger (TC 2.A.31) family. In terms of processing, N-glycosylated. In the brain, detected in cerebral cortex, subcortex, cerebellum, hippocampus and medulla (at protein level). In the cerebrum, expressed at high levels throughout the cortex, at lower levels in striatum and not detectable in the corpus callosum (at protein level). In the cerebellum, detected at high levels in the molecular layer but at very low levels in the granular layer (at protein level). In the central nervous system, detected in neurons in the olfactory bulb, cortex and cerebellum (at protein level). Within the hippocampus, abundantly expressed in CA3 pyramidal cells (at protein level). Strongly expressed in the retina with high levels in bipolar and amacrine cells (at protein level). Expressed in the epithelial cells of the choroid plexus. During embryonic development, expressed in neurons of the central nervous system. Also expressed in the peripheral nervous system and in non-neuronal tissues such as the dura and some epithelia including the acid-secreting epithelium of the stomach and the duodenal epithelium. In the embryonic retina, expression is restricted to the neuronal cell layer and the retinal pigment epithelium. In terms of tissue distribution, expressed at high levels in brain and at low levels in the pituitary, testis, kidney and ileum. Also expressed in pancreatic islets.

The protein localises to the basolateral cell membrane. Its subcellular location is the apical cell membrane. It is found in the cell projection. The protein resides in the dendrite. It localises to the axon. The protein localises to the perikaryon. Its subcellular location is the presynapse. It is found in the postsynapse. The enzyme catalyses 2 hydrogencarbonate(out) + chloride(in) + Na(+)(out) = 2 hydrogencarbonate(in) + chloride(out) + Na(+)(in). Zinc-binding negatively regulates its activity. Its function is as follows. Sodium/bicarbonate cotransporter which plays an important role in regulating intracellular pH. Has been shown to act as a sodium/bicarbonate cotransporter in exchange for intracellular chloride. Has also been shown to act as a sodium/biocarbonate cotransporter which is not responsible for net efflux of chloride, with the observed chloride efflux being due to chloride self-exchange. Controls neuronal pH and may contribute to the secretion of cerebrospinal fluid. Acting on presynaptic intracellular pH, it promotes GABA release, reduces the excitability of CA1 pyramidal neurons, and modulates short-term synaptic plasticity. Required in retinal cells to maintain normal pH which is necessary for normal vision. In the kidney, likely to mediate bicarbonate reclamation in the apical membrane of the proximal tubules. Functionally, sodium/bicarbonate cotransporter which mediates cotransport of sodium and bicarbonate in association with an efflux of intracellular chloride. In Mus musculus (Mouse), this protein is Sodium-driven chloride bicarbonate exchanger.